The chain runs to 238 residues: 6-phosphogluconolactonase (238 aa).

Belongs to the glucosamine/galactosamine-6-phosphate isomerase family. 6-phosphogluconolactonase subfamily.

The catalysed reaction is 6-phospho-D-glucono-1,5-lactone + H2O = 6-phospho-D-gluconate + H(+). The protein operates within carbohydrate degradation; pentose phosphate pathway; D-ribulose 5-phosphate from D-glucose 6-phosphate (oxidative stage): step 2/3. Its function is as follows. Hydrolysis of 6-phosphogluconolactone to 6-phosphogluconate. The protein is 6-phosphogluconolactonase (pgl) of Pseudomonas aeruginosa (strain ATCC 15692 / DSM 22644 / CIP 104116 / JCM 14847 / LMG 12228 / 1C / PRS 101 / PAO1).